We begin with the raw amino-acid sequence, 265 residues long: tRNA pseudouridine synthase A (265 aa).

Asp53 (nucleophile) is an active-site residue. Substrate is bound at residue Tyr111.

Belongs to the tRNA pseudouridine synthase TruA family. In terms of assembly, homodimer.

It carries out the reaction uridine(38/39/40) in tRNA = pseudouridine(38/39/40) in tRNA. Functionally, formation of pseudouridine at positions 38, 39 and 40 in the anticodon stem and loop of transfer RNAs. This Acinetobacter baumannii (strain AB307-0294) protein is tRNA pseudouridine synthase A.